Reading from the N-terminus, the 317-residue chain is U5 small nuclear ribonucleoprotein TSSC4 (317 aa).

Residues 1–19 are compositionally biased toward acidic residues; that stretch reads MAETEAGLEADEPTEDDTL. A disordered region spans residues 1-74; sequence MAETEAGLEA…PPTGTLTTAV (74 aa). Residues 20–37 show a composition bias toward low complexity; it reads PSDTVSLSDSDSDLSLPS. A phosphoserine mark is found at Ser57, Ser64, Ser83, and Ser92. The interval 74–101 is hom2; mediates interaction with the U5 snRNP complexes and required for spliceosomal tri-snRNP complex assembly; sequence VQPFHLRGMSSTFSQRSHSIFDCLESAA. Residues 101-152 are disordered; it reads ARQAPCSAPQTSVSDNGSFRRPVTPPSQTPARGLSRVHGNTGPTRVLPVPDY. Positions 108-117 are enriched in polar residues; the sequence is APQTSVSDNG. Thr124 bears the Phosphothreonine mark. The tract at residues 146-300 is interaction with SNRNP200; the sequence is VLPVPDYVSH…SKKRSRDHFR (155 aa). The segment at 147–183 is hom3; mediates interaction with the U5 snRNP complexes; sequence LPVPDYVSHPERWTKYSLEDVSEASEQSNRDAALAFL. The interval 198-238 is hom4; necessary for interaction with the PRPF19 complex and required for spliceosomal tri-snRNP complex assembly; that stretch reads FNQDPSSCGEGRVVFTKPVRDSEARAERKRVLKKGVGSGAG. Residue Lys214 is modified to N6-acetyllysine. Residues 216–317 are disordered; it reads VRDSEARAER…GPGSERGPSV (102 aa). Residues 240-250 are compositionally biased toward low complexity; it reads EAAVELAHLAG.

The protein belongs to the TSSC4 family. In terms of assembly, interacts in a RNA-independent manner with distinct U5 snRNP-containing complexes, the mono-U5 snRNP and the post-splicing U5 snRNP-PRPF19 complex. Interacts with SNRNP200; the interaction is direct, excludes recruitment of C9ORF78 and WBP4 to SNRNP200 and negatively regulates its RNA helicase activity. Interacts with PRPF8; the interaction is direct. As to expression, expressed in placenta. Widely expressed in embryo and newborn.

The protein localises to the nucleus. It localises to the cytoplasm. Functionally, protein associated with the U5 snRNP, during its maturation and its post-splicing recycling and which is required for spliceosomal tri-snRNP complex assembly in the nucleus. Has a molecular sequestering activity and transiently hinders SNRNP200 binding sites for constitutive splicing factors that intervene later during the assembly of the spliceosome and splicing. Together with its molecular sequestering activity, may also function as a molecular adapter and placeholder, coordinating the assembly of the U5 snRNP and its association with the U4/U6 di-snRNP. This is U5 small nuclear ribonucleoprotein TSSC4 from Mus musculus (Mouse).